Here is a 367-residue protein sequence, read N- to C-terminus: tRNA-specific 2-thiouridylase MnmA (367 aa).

ATP is bound by residues 14–21 and leucine 40; that span reads AMSGGVDS. Cysteine 108 serves as the catalytic Nucleophile. A disulfide bridge links cysteine 108 with cysteine 204. Glycine 132 contributes to the ATP binding site. Positions 154–156 are interaction with tRNA; it reads KDQ. The Cysteine persulfide intermediate role is filled by cysteine 204.

The protein belongs to the MnmA/TRMU family.

The protein localises to the cytoplasm. It carries out the reaction S-sulfanyl-L-cysteinyl-[protein] + uridine(34) in tRNA + AH2 + ATP = 2-thiouridine(34) in tRNA + L-cysteinyl-[protein] + A + AMP + diphosphate + H(+). In terms of biological role, catalyzes the 2-thiolation of uridine at the wobble position (U34) of tRNA, leading to the formation of s(2)U34. The polypeptide is tRNA-specific 2-thiouridylase MnmA (Rickettsia bellii (strain OSU 85-389)).